Here is a 525-residue protein sequence, read N- to C-terminus: Frizzled-4 (525 aa).

An N-terminal signal peptide occupies residues 1–24; it reads MERRGGGGRMLALLLAGLLGGARG. Residues 25-200 lie on the Extracellular side of the membrane; that stretch reads FGDEEERRCD…KCGYDAGLYS (176 aa). Positions 28–149 constitute an FZ domain; that stretch reads EEERRCDAIR…NDHNHMCMEG (122 aa). 8 disulfide bridges follow: C33–C94, C41–C87, C78–C116, C105–C146, C109–C133, C169–C188, C192–C270, and C290–C365. The N-linked (GlcNAc...) asparagine glycan is linked to N47. N-linked (GlcNAc...) asparagine glycosylation occurs at N132. The helical transmembrane segment at 201–231 threads the bilayer; that stretch reads RSAKEFTDIWMAVWASLCFISTAFTVLTFLI. Over 232 to 237 the chain is Cytoplasmic; it reads DSSRFS. Residues 238–263 form a helical membrane-spanning segment; that stretch reads YPERPIIFLSMCYNIYSIAYIVRLTV. The Extracellular segment spans residues 264–287; that stretch reads GRERISCDFEEAAEPVLIQEGLKN. The helical transmembrane segment at 288-321 threads the bilayer; sequence TGCAIIFLLMYFFGMASSIWWVILTLTWFLAAGL. The Cytoplasmic segment spans residues 322 to 324; it reads KWG. The chain crosses the membrane as a helical span at residues 325-353; that stretch reads HEAIEMHSSYFHIAAWAIPAVKTIVILIM. Topologically, residues 354 to 371 are extracellular; that stretch reads RLVDADELTGLCYVGNQN. A helical transmembrane segment spans residues 372–406; it reads LDALTGFVVAPLFTYLVIGTLFIAAGLVALFKIRS. The Cytoplasmic segment spans residues 407-419; that stretch reads NLQKDGTKTDKLE. The chain crosses the membrane as a helical span at residues 420–448; it reads RLMVKIGVFSVLYTVPATCVIACYFYEIS. The Extracellular segment spans residues 449 to 461; that stretch reads NWAVFRYSADDSN. A helical membrane pass occupies residues 462–483; the sequence is MAVEMLKIFMSLLVGITSGMWI. The Cytoplasmic segment spans residues 484–525; that stretch reads WSAKTLHTWQKCSNRLVNSGKVKREKRADGWVKPGKGNETVV. Residues 487-492 carry the Lys-Thr-X-X-X-Trp motif, mediates interaction with the PDZ domain of Dvl family members motif; that stretch reads KTLHTW. The short motif at 523–525 is the PDZ-binding element; it reads TVV.

This sequence belongs to the G-protein coupled receptor Fz/Smo family. As to quaternary structure, interacts (via FZ domain) with TSKU; TSKU competes with WNT2B for binding to FZD4, inhibiting Wnt signaling and repressing peripheral eye development. As to expression, expressed in the developing kidney, interdigital spaces and optic cup.

The protein resides in the cell membrane. Its function is as follows. Receptor for Wnt proteins. Most frizzled receptors are coupled to the beta-catenin canonical signaling pathway, which leads to the activation of disheveled proteins, inhibition of GSK-3 kinase, nuclear accumulation of beta-catenin and activation of Wnt target genes. A second signaling pathway involving PKC and calcium fluxes has been seen for some family members, but it is not yet clear if it represents a distinct pathway or if it can be integrated in the canonical pathway, as PKC seems to be required for Wnt-mediated inactivation of GSK-3 kinase. Both pathways seem to involve interactions with G-proteins. May be involved in transduction and intercellular transmission of polarity information during tissue morphogenesis and/or in differentiated tissues. This chain is Frizzled-4 (FZD4), found in Gallus gallus (Chicken).